The chain runs to 379 residues: Chaperone protein DnaJ (379 aa).

In terms of domain architecture, J spans 5-70 (DYYEVLGVGK…EKKAAYDQYG (66 aa)). A CR-type zinc finger spans residues 139–217 (GHEAQIRVPH…CHGQGKLKSQ (79 aa)). Cysteine 152, cysteine 155, cysteine 169, cysteine 172, cysteine 191, cysteine 194, cysteine 205, and cysteine 208 together coordinate Zn(2+). 4 CXXCXGXG motif repeats span residues 152–159 (CEHCHGNG), 169–176 (CPTCNGVG), 191–198 (CPKCHGSG), and 205–212 (CTKCHGQG).

The protein belongs to the DnaJ family. In terms of assembly, homodimer. Requires Zn(2+) as cofactor.

Its subcellular location is the cytoplasm. Participates actively in the response to hyperosmotic and heat shock by preventing the aggregation of stress-denatured proteins and by disaggregating proteins, also in an autonomous, DnaK-independent fashion. Unfolded proteins bind initially to DnaJ; upon interaction with the DnaJ-bound protein, DnaK hydrolyzes its bound ATP, resulting in the formation of a stable complex. GrpE releases ADP from DnaK; ATP binding to DnaK triggers the release of the substrate protein, thus completing the reaction cycle. Several rounds of ATP-dependent interactions between DnaJ, DnaK and GrpE are required for fully efficient folding. Also involved, together with DnaK and GrpE, in the DNA replication of plasmids through activation of initiation proteins. The polypeptide is Chaperone protein DnaJ (Cupriavidus metallidurans (strain ATCC 43123 / DSM 2839 / NBRC 102507 / CH34) (Ralstonia metallidurans)).